Here is a 280-residue protein sequence, read N- to C-terminus: Pantothenate synthetase (280 aa).

30–37 (MGYLHEGH) is an ATP binding site. Histidine 37 serves as the catalytic Proton donor. Glutamine 61 lines the (R)-pantoate pocket. Glutamine 61 lines the beta-alanine pocket. Residue 147-150 (GQKD) coordinates ATP. Glutamine 153 provides a ligand contact to (R)-pantoate. ATP is bound by residues valine 176 and 184 to 187 (MSSR).

It belongs to the pantothenate synthetase family. Homodimer.

The protein resides in the cytoplasm. It catalyses the reaction (R)-pantoate + beta-alanine + ATP = (R)-pantothenate + AMP + diphosphate + H(+). The protein operates within cofactor biosynthesis; (R)-pantothenate biosynthesis; (R)-pantothenate from (R)-pantoate and beta-alanine: step 1/1. Catalyzes the condensation of pantoate with beta-alanine in an ATP-dependent reaction via a pantoyl-adenylate intermediate. The sequence is that of Pantothenate synthetase from Thermotoga petrophila (strain ATCC BAA-488 / DSM 13995 / JCM 10881 / RKU-1).